A 147-amino-acid polypeptide reads, in one-letter code: 3-dehydroquinate dehydratase (147 aa).

Catalysis depends on Y23, which acts as the Proton acceptor. 3 residues coordinate substrate: N74, H80, and D87. The active-site Proton donor is H100. Substrate contacts are provided by residues L101–S102 and R111.

It belongs to the type-II 3-dehydroquinase family. Homododecamer.

It carries out the reaction 3-dehydroquinate = 3-dehydroshikimate + H2O. Its pathway is metabolic intermediate biosynthesis; chorismate biosynthesis; chorismate from D-erythrose 4-phosphate and phosphoenolpyruvate: step 3/7. Catalyzes a trans-dehydration via an enolate intermediate. In Clostridium botulinum (strain 657 / Type Ba4), this protein is 3-dehydroquinate dehydratase.